We begin with the raw amino-acid sequence, 195 residues long: Glycerol-3-phosphate acyltransferase (195 aa).

The next 5 membrane-spanning stretches (helical) occupy residues 7 to 27 (IFIL…SYVI), 52 to 72 (LALL…AIAQ), 80 to 100 (ILFL…YLFF), 113 to 133 (LIFI…ICFL), and 147 to 167 (LIAL…IFTI).

This sequence belongs to the PlsY family. In terms of assembly, probably interacts with PlsX.

The protein resides in the cell inner membrane. It catalyses the reaction an acyl phosphate + sn-glycerol 3-phosphate = a 1-acyl-sn-glycero-3-phosphate + phosphate. It participates in lipid metabolism; phospholipid metabolism. Catalyzes the transfer of an acyl group from acyl-phosphate (acyl-PO(4)) to glycerol-3-phosphate (G3P) to form lysophosphatidic acid (LPA). This enzyme utilizes acyl-phosphate as fatty acyl donor, but not acyl-CoA or acyl-ACP. In Ehrlichia ruminantium (strain Welgevonden), this protein is Glycerol-3-phosphate acyltransferase.